We begin with the raw amino-acid sequence, 445 residues long: Anthranilate N-benzoyltransferase protein 3 (445 aa).

Catalysis depends on proton acceptor residues His164 and Asp392.

The protein belongs to the plant acyltransferase family. Post-translationally, N-terminus is blocked.

It carries out the reaction anthranilate + benzoyl-CoA = N-benzoylanthranilate + CoA. It functions in the pathway phytoalexin biosynthesis; methoxydianthramide B biosynthesis. Its function is as follows. Catalyzes the formation of N-benzoylanthranilate, in the course of methoxydianthramide B, a phytoalexin. Phytoalexins are produced in response to infection by parasites, and are essential for the expression of disease resistance. The sequence is that of Anthranilate N-benzoyltransferase protein 3 (HCBT3) from Dianthus caryophyllus (Carnation).